The chain runs to 147 residues: Molybdopterin synthase catalytic subunit 1 (147 aa).

Substrate is bound by residues 43–45 (NVR), 109–110 (HR), Lys-125, and 132–134 (KKE).

Belongs to the MoaE family. In terms of assembly, heterotetramer of 2 MoaD subunits and 2 MoaE subunits. Also stable as homodimer. The enzyme changes between these two forms during catalysis.

It carries out the reaction 2 [molybdopterin-synthase sulfur-carrier protein]-C-terminal-Gly-aminoethanethioate + cyclic pyranopterin phosphate + H2O = molybdopterin + 2 [molybdopterin-synthase sulfur-carrier protein]-C-terminal Gly-Gly + 2 H(+). It participates in cofactor biosynthesis; molybdopterin biosynthesis. Functionally, converts molybdopterin precursor Z into molybdopterin. This requires the incorporation of two sulfur atoms into precursor Z to generate a dithiolene group. The sulfur is provided by MoaD. The protein is Molybdopterin synthase catalytic subunit 1 (moaE1) of Mycobacterium tuberculosis (strain ATCC 25618 / H37Rv).